We begin with the raw amino-acid sequence, 152 residues long: Protein SprT-like (152 aa).

Residues 7 to 148 (QRLVEEVSLQ…GKCKGKLNLI (142 aa)) enclose the SprT-like domain. His67 is a Zn(2+) binding site. Residue Glu68 is part of the active site. Position 71 (His71) interacts with Zn(2+).

It belongs to the SprT family. Requires Zn(2+) as cofactor.

It is found in the cytoplasm. The sequence is that of Protein SprT-like from Bacillus cereus (strain 03BB102).